A 247-amino-acid chain; its full sequence is ATP synthase subunit a, chloroplastic (247 aa).

A run of 5 helical transmembrane segments spans residues 38-58 (QVLI…ILVV), 95-115 (VPFI…GALL), 134-154 (INTT…AGIS), 199-219 (LVVV…VMFL), and 220-240 (GLFT…AYIG).

The protein belongs to the ATPase A chain family. As to quaternary structure, F-type ATPases have 2 components, CF(1) - the catalytic core - and CF(0) - the membrane proton channel. CF(1) has five subunits: alpha(3), beta(3), gamma(1), delta(1), epsilon(1). CF(0) has four main subunits: a, b, b' and c.

The protein resides in the plastid. The protein localises to the chloroplast thylakoid membrane. In terms of biological role, key component of the proton channel; it plays a direct role in the translocation of protons across the membrane. The sequence is that of ATP synthase subunit a, chloroplastic from Pisum sativum (Garden pea).